The primary structure comprises 573 residues: Excitatory amino acid transporter 2 (573 aa).

The span at 1–11 shows a compositional bias: polar residues; it reads MASTEGANNMP. The tract at residues 1-29 is disordered; that stretch reads MASTEGANNMPKQVEVRMHDSHLSSEEPK. The Cytoplasmic segment spans residues 1–44; sequence MASTEGANNMPKQVEVRMHDSHLSSEEPKHRNLGMRMCDKLGKN. Phosphoserine occurs at positions 3, 21, 24, and 25. The segment covering 14–29 has biased composition (basic and acidic residues); that stretch reads VEVRMHDSHLSSEEPK. The S-palmitoyl cysteine moiety is linked to residue C38. The next 3 helical transmembrane spans lie at 45 to 64, 88 to 108, and 121 to 142; these read LLLS…GGLL, MLKM…LSGL, and MVYY…VLAI. N205 and N215 each carry an N-linked (GlcNAc...) asparagine glycan. The next 3 membrane-spanning stretches (helical) occupy residues 235-258, 268-295, and 317-338; these read FKDG…MGKM, FFNI…ACLI, and ITVI…YFVV. The discontinuously helical intramembrane region spans 344–374; the sequence is FSFFAGIFQAWITALGTASSAGTLPVTFRCL. 361–363 contacts L-aspartate; that stretch reads ASS. Residues 384 to 410 form a helical membrane-spanning segment; that stretch reads VTRFVLPVGATINMDGTALYEAVAAIF. Na(+)-binding residues include G392, T394, and N396. L-aspartate-binding positions include T400, 441–445, D474, and N481; that span reads IPSAG. Residues 424-457 constitute an intramembrane region (discontinuously helical); the sequence is IVTVSLTATLASIGAASIPSAGLVTMLLILTAVG. A helical membrane pass occupies residues 471–492; it reads WLLDRMRTSVNVVGDSFGAGIV. Na(+) is bound by residues N481 and D485. Phosphoserine is present on residues S505, S520, S531, and S533. Y538 is modified (phosphotyrosine). Phosphoserine is present on residues S543, S559, and S563.

Belongs to the dicarboxylate/amino acid:cation symporter (DAACS) (TC 2.A.23) family. SLC1A2 subfamily. As to quaternary structure, homotrimer. Interacts with AJUBA. Glycosylated. In terms of processing, palmitoylation at Cys-38 is not required for correct subcellular localization, but is important for glutamate uptake activity. As to expression, localized in brain and is highly enriched in the Purkinje cell layer in cerebellum.

Its subcellular location is the cell membrane. It carries out the reaction K(+)(in) + L-glutamate(out) + 3 Na(+)(out) + H(+)(out) = K(+)(out) + L-glutamate(in) + 3 Na(+)(in) + H(+)(in). The enzyme catalyses D-aspartate(out) + K(+)(in) + 3 Na(+)(out) + H(+)(out) = D-aspartate(in) + K(+)(out) + 3 Na(+)(in) + H(+)(in). The catalysed reaction is K(+)(in) + L-aspartate(out) + 3 Na(+)(out) + H(+)(out) = K(+)(out) + L-aspartate(in) + 3 Na(+)(in) + H(+)(in). Its function is as follows. Sodium-dependent, high-affinity amino acid transporter that mediates the uptake of L-glutamate and also L-aspartate and D-aspartate. Functions as a symporter that transports one amino acid molecule together with two or three Na(+) ions and one proton, in parallel with the counter-transport of one K(+) ion. Mediates Cl(-) flux that is not coupled to amino acid transport; this avoids the accumulation of negative charges due to aspartate and Na(+) symport. Essential for the rapid removal of released glutamate from the synaptic cleft, and for terminating the postsynaptic action of glutamate. The polypeptide is Excitatory amino acid transporter 2 (Slc1a2) (Rattus norvegicus (Rat)).